We begin with the raw amino-acid sequence, 63 residues long: Beta-defensin 38 (63 aa).

The first 21 residues, 1–21 (MKISCFLLLVLSLYLFQVNQA), serve as a signal peptide directing secretion. 3 cysteine pairs are disulfide-bonded: cysteine 29-cysteine 58, cysteine 36-cysteine 51, and cysteine 41-cysteine 59.

The protein belongs to the beta-defensin family.

It localises to the secreted. Has antibacterial activity. This chain is Beta-defensin 38 (Defb38), found in Rattus norvegicus (Rat).